The primary structure comprises 230 residues: MPPHFLSADSTGQPHRHADRPKRVRTPGEPLRIGVGGPVGSGKTALVAALCRQLRDELSLAVLTNDIYTTEDADFLRRHAVLPDDRIAAVQTGGCPHTAIRDDITANLDAIDDLVAGHDHLDLILVESGGDNLTATFSSGLVDVQIFVVDVAGGDKVPRKGGPGVTFSDLLVINKTDLAPMVGADLDVMRRDSTKVRGERPFVLISLTADPTAGPVLDWVRAQLRVPVQG.

A disordered region spans residues 1–31; the sequence is MPPHFLSADSTGQPHRHADRPKRVRTPGEPL. A compositionally biased stretch (basic residues) spans 14–25; sequence PHRHADRPKRVR. 37–44 lines the GTP pocket; that stretch reads GPVGSGKT.

This sequence belongs to the SIMIBI class G3E GTPase family. UreG subfamily. As to quaternary structure, homodimer. UreD, UreF and UreG form a complex that acts as a GTP-hydrolysis-dependent molecular chaperone, activating the urease apoprotein by helping to assemble the nickel containing metallocenter of UreC. The UreE protein probably delivers the nickel.

It localises to the cytoplasm. Functionally, facilitates the functional incorporation of the urease nickel metallocenter. This process requires GTP hydrolysis, probably effectuated by UreG. The chain is Urease accessory protein UreG from Mycobacterium sp. (strain JLS).